Here is a 379-residue protein sequence, read N- to C-terminus: Retron Se72 reverse transcriptase (379 aa).

Residues 1-245 form the Reverse transcriptase domain; it reads MNKPRFNGTP…SKLSVTGLWV (245 aa). 3 residues coordinate Mg(2+): Asp-109, Asp-188, and Asp-189.

It belongs to the bacterial reverse transcriptase family.

The enzyme catalyses DNA(n) + a 2'-deoxyribonucleoside 5'-triphosphate = DNA(n+1) + diphosphate. Its function is as follows. Reverse transcriptase (RT) component of antiviral defense system retron Se72, composed of a non-coding RNA (ncRNA), this reverse transcriptase (RT) and the following cold shock-like protein. Expression of retron Se72 confers protection against bacteriophage lambda. At multiplicity of infection (MOI) of 0.02 cultures slow growth when infected with lambda but do not collapse, at MOI 2 cultures enter growth stasis. Responsible for synthesis of msDNA (a branched molecule with RNA linked by a 2',5'-phosphodiester bond to ssDNA). The retron transcript serves as primer (from a conserved internal G residue) and template for the reaction, and codes for the RT. The DNA segment is predicted to be 72 bases long. The protein is Retron Se72 reverse transcriptase of Salmonella heidelberg (strain 579083-10).